The sequence spans 263 residues: Peptide methionine sulfoxide reductase A4, chloroplastic (263 aa).

A chloroplast-targeting transit peptide spans 1 to 75 (MPPLLASTSS…GLGGLGGSPR (75 aa)).

It belongs to the MsrA Met sulfoxide reductase family. As to expression, expressed in roots, stems, leaves and flowers.

The protein localises to the plastid. It localises to the chloroplast. It carries out the reaction L-methionyl-[protein] + [thioredoxin]-disulfide + H2O = L-methionyl-(S)-S-oxide-[protein] + [thioredoxin]-dithiol. The enzyme catalyses [thioredoxin]-disulfide + L-methionine + H2O = L-methionine (S)-S-oxide + [thioredoxin]-dithiol. Functionally, catalyzes the reduction of methionine sulfoxide (MetSO) to methionine in proteins. Involved in abiotic and salt stress responses. Plays a protective role against oxidative stress by restoring activity to proteins that have been inactivated by methionine oxidation. MSRA family specifically reduces the MetSO S-enantiomer. The chain is Peptide methionine sulfoxide reductase A4, chloroplastic from Oryza sativa subsp. japonica (Rice).